The sequence spans 252 residues: Major prion protein (252 aa).

An N-terminal signal peptide occupies residues 1-28; it reads MAHLGYWMLLLFVATWSDVGLCKKRPKP. An interaction with GRB2, ERI3 and SYN1 region spans residues 23 to 229; it reads KKRPKPGGGW…ESQAAYQRAA (207 aa). The interval 26–109 is disordered; the sequence is PKPGGGWNTG…KPSKPKTSMK (84 aa). Repeat copies occupy residues 51 to 59, 60 to 67, 68 to 75, 76 to 83, and 84 to 92. Positions 51–92 are 5 X 8 AA tandem repeats of P-H-G-G-G-W-G-Q; sequence PPQGGGWGQPHGGGWGQPHGGGWGQPHGGGWGQPHGGGWGQG. Residues 53–93 are compositionally biased toward gly residues; it reads QGGGWGQPHGGGWGQPHGGGWGQPHGGGWGQPHGGGWGQGG. Cu(2+) contacts are provided by histidine 61, glycine 62, glycine 63, histidine 69, glycine 70, glycine 71, histidine 77, glycine 78, glycine 79, histidine 85, glycine 86, and glycine 87. Cysteines 178 and 213 form a disulfide. N-linked (GlcNAc...) asparagine glycosylation is found at asparagine 180 and asparagine 196. Alanine 229 carries the GPI-anchor amidated alanine lipid modification. The propeptide at 230–252 is removed in mature form; the sequence is GVLLFSSPPVILLISFLIFLIVG.

This sequence belongs to the prion family. In terms of assembly, monomer and homodimer. Has a tendency to aggregate into amyloid fibrils containing a cross-beta spine, formed by a steric zipper of superposed beta-strands. Soluble oligomers may represent an intermediate stage on the path to fibril formation. Copper binding may promote oligomerization. Interacts with GRB2, APP, ERI3/PRNPIP and SYN1. Mislocalized cytosolically exposed PrP interacts with MGRN1; this interaction alters MGRN1 subcellular location and causes lysosomal enlargement. Interacts with KIAA1191.

The protein resides in the cell membrane. Its subcellular location is the golgi apparatus. Its primary physiological function is unclear. Has cytoprotective activity against internal or environmental stresses. May play a role in neuronal development and synaptic plasticity. May be required for neuronal myelin sheath maintenance. May play a role in iron uptake and iron homeostasis. Soluble oligomers are toxic to cultured neuroblastoma cells and induce apoptosis (in vitro). Association with GPC1 (via its heparan sulfate chains) targets PRNP to lipid rafts. Also provides Cu(2+) or Zn(2+) for the ascorbate-mediated GPC1 deaminase degradation of its heparan sulfate side chains. This Oryctolagus cuniculus (Rabbit) protein is Major prion protein (PRNP).